A 128-amino-acid polypeptide reads, in one-letter code: Aspartate 1-decarboxylase (128 aa).

The active-site Schiff-base intermediate with substrate; via pyruvic acid is the S25. S25 is modified (pyruvic acid (Ser)). A substrate-binding site is contributed by T57. The Proton donor role is filled by Y58. 73–75 is a substrate binding site; it reads GSA.

It belongs to the PanD family. As to quaternary structure, heterooctamer of four alpha and four beta subunits. Pyruvate serves as cofactor. Post-translationally, is synthesized initially as an inactive proenzyme, which is activated by self-cleavage at a specific serine bond to produce a beta-subunit with a hydroxyl group at its C-terminus and an alpha-subunit with a pyruvoyl group at its N-terminus.

Its subcellular location is the cytoplasm. It carries out the reaction L-aspartate + H(+) = beta-alanine + CO2. Its pathway is cofactor biosynthesis; (R)-pantothenate biosynthesis; beta-alanine from L-aspartate: step 1/1. Functionally, catalyzes the pyruvoyl-dependent decarboxylation of aspartate to produce beta-alanine. The sequence is that of Aspartate 1-decarboxylase from Burkholderia vietnamiensis (strain G4 / LMG 22486) (Burkholderia cepacia (strain R1808)).